A 277-amino-acid chain; its full sequence is Ribosome-inactivating protein luffin-alpha (277 aa).

The N-terminal stretch at 1–19 is a signal peptide; it reads MKRFTVLILAIFVAASTVE. Residue E179 is part of the active site.

This sequence belongs to the ribosome-inactivating protein family. Type 1 RIP subfamily.

It catalyses the reaction Endohydrolysis of the N-glycosidic bond at one specific adenosine on the 28S rRNA.. The sequence is that of Ribosome-inactivating protein luffin-alpha from Luffa aegyptiaca (Sponge gourd).